Here is a 355-residue protein sequence, read N- to C-terminus: Protein RecA (355 aa).

67-74 is a binding site for ATP; sequence GPESSGKT. Residues 335–355 form a disordered region; that stretch reads NSLVSDVESEDEGASESNEEF. Over residues 341–355 the composition is skewed to acidic residues; sequence VESEDEGASESNEEF.

This sequence belongs to the RecA family.

The protein resides in the cytoplasm. In terms of biological role, can catalyze the hydrolysis of ATP in the presence of single-stranded DNA, the ATP-dependent uptake of single-stranded DNA by duplex DNA, and the ATP-dependent hybridization of homologous single-stranded DNAs. It interacts with LexA causing its activation and leading to its autocatalytic cleavage. This chain is Protein RecA, found in Sodalis glossinidius.